Here is a 115-residue protein sequence, read N- to C-terminus: NAD(P)H-quinone oxidoreductase subunit M (115 aa).

It belongs to the complex I NdhM subunit family. NDH-1 can be composed of about 15 different subunits; different subcomplexes with different compositions have been identified which probably have different functions.

Its subcellular location is the cellular thylakoid membrane. The catalysed reaction is a plastoquinone + NADH + (n+1) H(+)(in) = a plastoquinol + NAD(+) + n H(+)(out). The enzyme catalyses a plastoquinone + NADPH + (n+1) H(+)(in) = a plastoquinol + NADP(+) + n H(+)(out). Its function is as follows. NDH-1 shuttles electrons from an unknown electron donor, via FMN and iron-sulfur (Fe-S) centers, to quinones in the respiratory and/or the photosynthetic chain. The immediate electron acceptor for the enzyme in this species is believed to be plastoquinone. Couples the redox reaction to proton translocation, and thus conserves the redox energy in a proton gradient. Cyanobacterial NDH-1 also plays a role in inorganic carbon-concentration. This Prochlorococcus marinus (strain MIT 9215) protein is NAD(P)H-quinone oxidoreductase subunit M.